The chain runs to 679 residues: G-protein-signaling modulator 2 (679 aa).

Residues 22-357 are important for interaction with NUMA1; INSC and FRMPD1; sequence ASCLELALEG…HLEISREVGD (336 aa). TPR repeat units lie at residues 24–57, 62–95, 102–135, 142–184, 202–235, 242–275, 282–315, and 322–355; these read CLEL…GTED, SAIY…ARTI, AKAS…SREL, ARAL…AVDL, GRAF…AKEF, RRAY…ARQL, AQSC…AQEL, and GRAC…SREV. Phosphoserine is present on residues serine 408 and serine 484. Threonine 487 bears the Phosphothreonine mark. The 23-residue stretch at 490–512 folds into the GoLoco 1 domain; it reads DEGFFDLLRRFQSNRMDDQRCHL. Phosphoserine occurs at positions 540 and 564. GoLoco domains lie at 543-565, 594-616, and 628-650; these read TDEF…RASF, DEDF…RCAP, and DEDF…RVLL. Residues arginine 608, arginine 613, arginine 642, and arginine 647 each contribute to the GDP site.

The protein belongs to the GPSM family. In terms of assembly, interacts with the dynein-dynactin complex; this interaction is inhibited in a PLK1-dependent manner. Part of a spindle orientation complex at least composed of GNAI1, GPSM2 and NUMA1. Interacts with LLGL2. Interacts (via TPR repeat region) with INSC/inscuteable. Interacts (via TPR repeat region) with NUMA1 (via C-terminus); this interaction is direct, inhibited in a PLK1-dependent manner and promotes spindle pole organization. INSC and NUMA1 compete for the same binding site, but INSC has higher affinity and can displace NUMA1 (in vitro). Interacts with GNAI2. Interacts (via GoLoco domains) with the GDP-bound form of GNAI1 and GNAI3; has much lower affinity for the GTP-bound form. Interaction with GDP-bound GNAI3 strongly enhances the affinity for NUMA1. Interacts (via TPR repeat region) with FRMPD1. INSC and FRMPD1 compete for the same binding site, but INSC has higher affinity and can displace FRMPD1 (in vitro). Interacts (via TPR repeat region) with FRMPD4. Identified in a complex with INSC and F2RL2/Par3. Interacts with TASOR. Detected in brain and liver (at protein level). Detected in brain, spleen, liver and testis, and at lower levels in heart, lung and kidney. Enriched in the ventricular zone of the developing central nervous systems. Expressed in proximal colon, ileum, ovary, Sertoli cells of the testis and granular cells within the cerebellum.

The protein resides in the cytoplasm. It localises to the cell cortex. Its subcellular location is the cytoskeleton. The protein localises to the spindle pole. It is found in the lateral cell membrane. Its function is as follows. Plays an important role in mitotic spindle pole organization via its interaction with NUMA1. Required for cortical dynein-dynactin complex recruitment during metaphase. Plays a role in metaphase spindle orientation. Plays an important role in asymmetric cell divisions. Has guanine nucleotide dissociation inhibitor (GDI) activity towards G(i) alpha proteins, such as GNAI1 and GNAI3, and thereby regulates their activity. This Mus musculus (Mouse) protein is G-protein-signaling modulator 2 (Gpsm2).